The primary structure comprises 393 residues: tRNA(Met) cytidine acetate ligase (393 aa).

ATP-binding residues include G81, N142, and R167.

It belongs to the TmcAL family.

The protein resides in the cytoplasm. It catalyses the reaction cytidine(34) in elongator tRNA(Met) + acetate + ATP = N(4)-acetylcytidine(34) in elongator tRNA(Met) + AMP + diphosphate. Its function is as follows. Catalyzes the formation of N(4)-acetylcytidine (ac(4)C) at the wobble position of elongator tRNA(Met), using acetate and ATP as substrates. First activates an acetate ion to form acetyladenylate (Ac-AMP) and then transfers the acetyl group to tRNA to form ac(4)C34. This chain is tRNA(Met) cytidine acetate ligase, found in Bacillus cereus (strain ATCC 10987 / NRS 248).